Reading from the N-terminus, the 172-residue chain is Sec-independent protein translocase protein TatB (172 aa).

A helical membrane pass occupies residues 1–21; that stretch reads MFDIGWSELLVIGVVALIAIG.

It belongs to the TatB family. In terms of assembly, the Tat system comprises two distinct complexes: a TatABC complex, containing multiple copies of TatA, TatB and TatC subunits, and a separate TatA complex, containing only TatA subunits. Substrates initially bind to the TatABC complex, which probably triggers association of the separate TatA complex to form the active translocon.

Its subcellular location is the cell inner membrane. Its function is as follows. Part of the twin-arginine translocation (Tat) system that transports large folded proteins containing a characteristic twin-arginine motif in their signal peptide across membranes. Together with TatC, TatB is part of a receptor directly interacting with Tat signal peptides. TatB may form an oligomeric binding site that transiently accommodates folded Tat precursor proteins before their translocation. This is Sec-independent protein translocase protein TatB from Rhodopseudomonas palustris (strain BisB18).